The primary structure comprises 493 residues: Maintenance of mitochondrial morphology protein 1 (493 aa).

The Lumenal segment spans residues 1-23 (MSQHSQYGVPGVPAQSSLSFTQG). Residues 24–44 (FLLGQLSVVLLIGAFIKFFIF) form a helical membrane-spanning segment. The Cytoplasmic portion of the chain corresponds to 45 to 493 (GEAPAPPSRG…GSMPRVVRTP (449 aa)). The disordered stretch occupies residues 52–104 (SRGLASRTASHHRSYSINQGDNNANNNTNNGSSPRTLREKPSTSNVLRPVPSS). The segment covering 69–81 (NQGDNNANNNTNN) has biased composition (low complexity). Polar residues predominate over residues 93 to 104 (STSNVLRPVPSS). An SMP-LTD domain is found at 140-391 (QPESLDWFNV…EPRVQVVGLP (252 aa)). The segment at 420 to 493 (SSRSGGGPVE…GSMPRVVRTP (74 aa)) is disordered.

Belongs to the MMM1 family. As to quaternary structure, homodimer. Component of the ER-mitochondria encounter structure (ERMES) or MDM complex, composed of mmm1, mdm10, mdm12 and mdm34. A mmm1 homodimer associates with one molecule of mdm12 on each side in a pairwise head-to-tail manner, and the SMP-LTD domains of mmm1 and mdm12 generate a continuous hydrophobic tunnel for phospholipid trafficking.

It is found in the endoplasmic reticulum membrane. In terms of biological role, component of the ERMES/MDM complex, which serves as a molecular tether to connect the endoplasmic reticulum (ER) and mitochondria. Components of this complex are involved in the control of mitochondrial shape and protein biogenesis, and function in nonvesicular lipid trafficking between the ER and mitochondria. The mdm12-mmm1 subcomplex functions in the major beta-barrel assembly pathway that is responsible for biogenesis of all outer membrane beta-barrel proteins, and acts in a late step after the SAM complex. The mdm10-mdm12-mmm1 subcomplex further acts in the TOM40-specific pathway after the action of the mdm12-mmm1 complex. Essential for establishing and maintaining the structure of mitochondria and maintenance of mtDNA nucleoids. The chain is Maintenance of mitochondrial morphology protein 1 from Talaromyces stipitatus (strain ATCC 10500 / CBS 375.48 / QM 6759 / NRRL 1006) (Penicillium stipitatum).